Reading from the N-terminus, the 333-residue chain is Anthranilate phosphoribosyltransferase (333 aa).

Residues glycine 80, 83-84, threonine 88, 90-93, 108-116, and serine 120 each bind 5-phospho-alpha-D-ribose 1-diphosphate; these read GD, NLST, and KHGNRSASG. Glycine 80 provides a ligand contact to anthranilate. A Mg(2+)-binding site is contributed by serine 92. Asparagine 111 lines the anthranilate pocket. Residue arginine 166 participates in anthranilate binding. Residues aspartate 224 and glutamate 225 each coordinate Mg(2+).

This sequence belongs to the anthranilate phosphoribosyltransferase family. Homodimer. Mg(2+) is required as a cofactor.

The catalysed reaction is N-(5-phospho-beta-D-ribosyl)anthranilate + diphosphate = 5-phospho-alpha-D-ribose 1-diphosphate + anthranilate. It participates in amino-acid biosynthesis; L-tryptophan biosynthesis; L-tryptophan from chorismate: step 2/5. Its function is as follows. Catalyzes the transfer of the phosphoribosyl group of 5-phosphorylribose-1-pyrophosphate (PRPP) to anthranilate to yield N-(5'-phosphoribosyl)-anthranilate (PRA). In Pyrobaculum arsenaticum (strain DSM 13514 / JCM 11321 / PZ6), this protein is Anthranilate phosphoribosyltransferase.